The following is a 355-amino-acid chain: Histidinol-phosphate aminotransferase (355 aa).

Residue Lys218 is modified to N6-(pyridoxal phosphate)lysine.

This sequence belongs to the class-II pyridoxal-phosphate-dependent aminotransferase family. Histidinol-phosphate aminotransferase subfamily. In terms of assembly, homodimer. Pyridoxal 5'-phosphate is required as a cofactor.

It carries out the reaction L-histidinol phosphate + 2-oxoglutarate = 3-(imidazol-4-yl)-2-oxopropyl phosphate + L-glutamate. Its pathway is amino-acid biosynthesis; L-histidine biosynthesis; L-histidine from 5-phospho-alpha-D-ribose 1-diphosphate: step 7/9. The polypeptide is Histidinol-phosphate aminotransferase (Chlorobium limicola (strain DSM 245 / NBRC 103803 / 6330)).